We begin with the raw amino-acid sequence, 184 residues long: ATP synthase subunit b 1 (184 aa).

The helical transmembrane segment at 4 to 24 (LSILAVLAASPAMAATGPFLS) threads the bilayer.

It belongs to the ATPase B chain family. As to quaternary structure, F-type ATPases have 2 components, F(1) - the catalytic core - and F(0) - the membrane proton channel. F(1) has five subunits: alpha(3), beta(3), gamma(1), delta(1), epsilon(1). F(0) has three main subunits: a(1), b(2) and c(10-14). The alpha and beta chains form an alternating ring which encloses part of the gamma chain. F(1) is attached to F(0) by a central stalk formed by the gamma and epsilon chains, while a peripheral stalk is formed by the delta and b chains.

Its subcellular location is the cell inner membrane. F(1)F(0) ATP synthase produces ATP from ADP in the presence of a proton or sodium gradient. F-type ATPases consist of two structural domains, F(1) containing the extramembraneous catalytic core and F(0) containing the membrane proton channel, linked together by a central stalk and a peripheral stalk. During catalysis, ATP synthesis in the catalytic domain of F(1) is coupled via a rotary mechanism of the central stalk subunits to proton translocation. Functionally, component of the F(0) channel, it forms part of the peripheral stalk, linking F(1) to F(0). This is ATP synthase subunit b 1 from Cereibacter sphaeroides (strain ATCC 17029 / ATH 2.4.9) (Rhodobacter sphaeroides).